Reading from the N-terminus, the 189-residue chain is Putative manganese efflux pump MntP (189 aa).

6 helical membrane-spanning segments follow: residues 6–26 (IFGI…AAGV), 39–59 (LAWH…YAGL), 71–91 (WIAF…SFDA), 106–126 (LVLL…SLSV), 131–151 (VWMP…GGLM), and 169–189 (VGAG…GVFY).

This sequence belongs to the MntP (TC 9.B.29) family.

It localises to the cell inner membrane. In terms of biological role, probably functions as a manganese efflux pump. This chain is Putative manganese efflux pump MntP, found in Desulfosudis oleivorans (strain DSM 6200 / JCM 39069 / Hxd3) (Desulfococcus oleovorans).